We begin with the raw amino-acid sequence, 308 residues long: Protein translocase subunit SecF (308 aa).

A run of 6 helical transmembrane segments spans residues 12–32 (YFIFSTFMILFSLFSIFTKGF), 127–147 (AKNALWALALGSILILIYITI), 152–172 (IYALSSVLALLHDVLVTIGFI), 182–202 (PFIAAILTILGYSMNDTIVIF), 234–254 (VYTSLTTLLALAALLIFGGST), and 262–282 (LLVGIVYGTYSSIWLASPLVY).

The protein belongs to the SecD/SecF family. SecF subfamily. Forms a complex with SecD. Part of the essential Sec protein translocation apparatus which comprises SecA, SecYEG and auxiliary proteins SecDF. Other proteins may also be involved.

It localises to the cell inner membrane. Its function is as follows. Part of the Sec protein translocase complex. Interacts with the SecYEG preprotein conducting channel. SecDF uses the proton motive force (PMF) to complete protein translocation after the ATP-dependent function of SecA. This is Protein translocase subunit SecF from Sebaldella termitidis (strain ATCC 33386 / NCTC 11300).